The chain runs to 427 residues: D-inositol 3-phosphate glycosyltransferase 2 (427 aa).

His-14 lines the 1D-myo-inositol 3-phosphate pocket. Residues 20–21 (QP) and Gly-28 contribute to the UDP-N-acetyl-alpha-D-glucosamine site. 1D-myo-inositol 3-phosphate contacts are provided by residues 25–30 (DAGGMN), Lys-83, Tyr-116, Thr-140, and Arg-160. Arg-234, Lys-239, and Val-300 together coordinate UDP-N-acetyl-alpha-D-glucosamine. Mg(2+) is bound by residues Tyr-309, Arg-310, and Ala-312. UDP-N-acetyl-alpha-D-glucosamine contacts are provided by Glu-322 and Glu-330. Thr-336 contributes to the Mg(2+) binding site.

This sequence belongs to the glycosyltransferase group 1 family. MshA subfamily. Homodimer.

It carries out the reaction 1D-myo-inositol 3-phosphate + UDP-N-acetyl-alpha-D-glucosamine = 1D-myo-inositol 2-acetamido-2-deoxy-alpha-D-glucopyranoside 3-phosphate + UDP + H(+). In terms of biological role, catalyzes the transfer of a N-acetyl-glucosamine moiety to 1D-myo-inositol 3-phosphate to produce 1D-myo-inositol 2-acetamido-2-deoxy-glucopyranoside 3-phosphate in the mycothiol biosynthesis pathway. This Catenulispora acidiphila (strain DSM 44928 / JCM 14897 / NBRC 102108 / NRRL B-24433 / ID139908) protein is D-inositol 3-phosphate glycosyltransferase 2.